A 342-amino-acid polypeptide reads, in one-letter code: Aquaporin-7 (342 aa).

Topologically, residues M1–E36 are cytoplasmic. A Phosphoserine modification is found at S20. A helical membrane pass occupies residues F37–S54. The Extracellular portion of the chain corresponds to V55–Y67. The helical transmembrane segment at L68 to A85 threads the bilayer. Topologically, residues G86–S89 are cytoplasmic. Residues G90 to A103 constitute an intramembrane region (discontinuously helical). The NPA 1 signature appears at N94 to A96. Residues L104–K111 lie on the Cytoplasmic side of the membrane. The chain crosses the membrane as a helical span at residues F112 to S132. Topologically, residues L133–R170 are extracellular. A helical membrane pass occupies residues G171–A188. The Cytoplasmic portion of the chain corresponds to I189–G200. The helical transmembrane segment at T201–L217 threads the bilayer. The Extracellular segment spans residues G218–T221. An intramembrane region (discontinuously helical) is located at residues G222 to I235. The NPA 2 signature appears at N226–S228. Residues F236–W253 lie on the Extracellular side of the membrane. The chain crosses the membrane as a helical span at residues W254–F275. Over I276–F342 the chain is Cytoplasmic.

It belongs to the MIP/aquaporin (TC 1.A.8) family. In terms of assembly, homotetramer; each monomer provides an independent glycerol/water pore. Two homotetramers on opposing membranes can dimerize, forming a cell-cell junction. Interacts with PLIN1. Post-translationally, phosphorylation by PKA could prevent the interaction with PLIN1. In terms of tissue distribution, detected in the sperm head (at protein level). Detected in white adipose tissue.

Its subcellular location is the cell membrane. The protein localises to the cytoplasmic vesicle membrane. It is found in the lipid droplet. The enzyme catalyses glycerol(in) = glycerol(out). It catalyses the reaction H2O(in) = H2O(out). The catalysed reaction is urea(in) = urea(out). With respect to regulation, glycerol transport is regulated by pH, with the porin being permeable to glycerol at pH 7.4 but not at pH 5.5. Water permeability, however, is not influenced by pH. Inhibited by mercury ions. Functionally, aquaglyceroporins form homotetrameric transmembrane channels, with each monomer independently mediating glycerol and water transport across the plasma membrane along their osmotic gradient. Could also be permeable to urea. Mediates the efflux of glycerol, formed upon triglyceride hydrolysis, to avoid its accumulation in adipocytes and to make it available to other tissues. In the kidney, mediates the reabsorption of glycerol, preventing its loss in urine, again participating to energy homeostasis. In pancreatic beta cells, it also mediates the efflux of glycerol, regulating its intracellular levels. This is Aquaporin-7 from Homo sapiens (Human).